The primary structure comprises 422 residues: 26S proteasome non-ATPase regulatory subunit 11 (422 aa).

Alanine 2 is modified (N-acetylalanine). A phosphoserine mark is found at serine 14 and serine 23. Positions 224 to 392 (DWKTAYSYFY…GVLIIFDEPP (169 aa)) constitute a PCI domain. Lysine 274 participates in a covalent cross-link: Glycyl lysine isopeptide (Lys-Gly) (interchain with G-Cter in SUMO2).

It belongs to the proteasome subunit S9 family. In terms of assembly, component of the 19S proteasome regulatory particle complex. The 26S proteasome consists of a 20S core particle (CP) and two 19S regulatory subunits (RP). The regulatory particle is made of a lid composed of 9 subunits including PSMD11, a base containing 6 ATPases and few additional components.

Its function is as follows. Component of the 26S proteasome, a multiprotein complex involved in the ATP-dependent degradation of ubiquitinated proteins. This complex plays a key role in the maintenance of protein homeostasis by removing misfolded or damaged proteins, which could impair cellular functions, and by removing proteins whose functions are no longer required. Therefore, the proteasome participates in numerous cellular processes, including cell cycle progression, apoptosis, or DNA damage repair. In the complex, PSMD11 is required for proteasome assembly. Plays a key role in increased proteasome activity in embryonic stem cells (ESCs): its high expression in ESCs promotes enhanced assembly of the 26S proteasome, followed by higher proteasome activity. The sequence is that of 26S proteasome non-ATPase regulatory subunit 11 (Psmd11) from Mus musculus (Mouse).